The primary structure comprises 173 residues: MPRSMKNDNFIDKTFTVMADLILKLMPGVSPEQKKAFAYYRDGMAAQSEGEYAEALENYREALALEQDDEDRSYILYNMGLIYQSNGELDKALEYYHQALELNPRLCSALNNIAVLLHHKGEQSLQAGDEETAEALFDEAAQYWIRAIRIAPNNYIEAQNWLKTTGRANLELY.

TPR repeat units follow at residues 36-69 (AFAYYRDGMAAQSEGEYAEALENYREALALEQDD), 73-106 (SYILYNMGLIYQSNGELDKALEYYHQALELNPRL), and 121-154 (GEQSLQAGDEETAEALFDEAAQYWIRAIRIAPNN).

Belongs to the Ycf3 family.

It localises to the cellular thylakoid membrane. In terms of biological role, essential for the assembly of the photosystem I (PSI) complex. May act as a chaperone-like factor to guide the assembly of the PSI subunits. The protein is Photosystem I assembly protein Ycf3 of Synechococcus sp. (strain JA-3-3Ab) (Cyanobacteria bacterium Yellowstone A-Prime).